A 201-amino-acid polypeptide reads, in one-letter code: Urease accessory protein UreG (201 aa).

Position 11–18 (11–18) interacts with GTP; it reads GPVGSGKT.

This sequence belongs to the SIMIBI class G3E GTPase family. UreG subfamily. Homodimer. UreD, UreF and UreG form a complex that acts as a GTP-hydrolysis-dependent molecular chaperone, activating the urease apoprotein by helping to assemble the nickel containing metallocenter of UreC. The UreE protein probably delivers the nickel.

Its subcellular location is the cytoplasm. Facilitates the functional incorporation of the urease nickel metallocenter. This process requires GTP hydrolysis, probably effectuated by UreG. The polypeptide is Urease accessory protein UreG (Prochlorococcus marinus subsp. pastoris (strain CCMP1986 / NIES-2087 / MED4)).